The following is a 117-amino-acid chain: Large ribosomal subunit protein uL24 (117 aa).

Residues 1–10 (MSKQPRKQRK) are compositionally biased toward basic residues. The segment at 1–28 (MSKQPRKQRKALYNAPAHARGKHMSATL) is disordered.

This sequence belongs to the universal ribosomal protein uL24 family. Part of the 50S ribosomal subunit.

One of two assembly initiator proteins, it binds directly to the 5'-end of the 23S rRNA, where it nucleates assembly of the 50S subunit. Functionally, located at the polypeptide exit tunnel on the outside of the subunit. This is Large ribosomal subunit protein uL24 from Methanobrevibacter smithii (strain ATCC 35061 / DSM 861 / OCM 144 / PS).